A 297-amino-acid polypeptide reads, in one-letter code: E3 ubiquitin-protein ligase RNF212B (297 aa).

The RING-type zinc-finger motif lies at Cys-6–Gly-40. Residues Leu-87–Gly-136 are a coiled coil. 2 disordered regions span residues Val-152–Ser-179 and Arg-198–Pro-269. A compositionally biased stretch (low complexity) spans Pro-163–Ser-179. A compositionally biased stretch (polar residues) spans Pro-206–Gly-234.

As to quaternary structure, homodimer. In terms of processing, autoubiquitinated.

The protein resides in the chromosome. The catalysed reaction is S-ubiquitinyl-[E2 ubiquitin-conjugating enzyme]-L-cysteine + [acceptor protein]-L-lysine = [E2 ubiquitin-conjugating enzyme]-L-cysteine + N(6)-ubiquitinyl-[acceptor protein]-L-lysine.. The protein operates within protein modification; protein ubiquitination. Functionally, ubiquitin E3 ligase that acts as a crucial factor for crossing-over (CO) formation during meiosis. Essential for normal prophase I progression and for ensuring appropriate CO designation in meiosis. Recruits key components of the cross-over machinery either directly ou indirectly, leading to the activation of the MutL-gamma complex. The function of RNF212B in CO designation is dependent on its catalytic activity. This Mus musculus (Mouse) protein is E3 ubiquitin-protein ligase RNF212B (Rnf212b).